The primary structure comprises 322 residues: Transaldolase (322 aa).

Catalysis depends on Lys136, which acts as the Schiff-base intermediate with substrate.

Belongs to the transaldolase family. Type 1 subfamily. In terms of assembly, homodimer.

It is found in the cytoplasm. The enzyme catalyses D-sedoheptulose 7-phosphate + D-glyceraldehyde 3-phosphate = D-erythrose 4-phosphate + beta-D-fructose 6-phosphate. It functions in the pathway carbohydrate degradation; pentose phosphate pathway; D-glyceraldehyde 3-phosphate and beta-D-fructose 6-phosphate from D-ribose 5-phosphate and D-xylulose 5-phosphate (non-oxidative stage): step 2/3. Transaldolase is important for the balance of metabolites in the pentose-phosphate pathway. This Xanthomonas euvesicatoria pv. vesicatoria (strain 85-10) (Xanthomonas campestris pv. vesicatoria) protein is Transaldolase.